The chain runs to 146 residues: Large ribosomal subunit protein bL9 (146 aa).

The protein belongs to the bacterial ribosomal protein bL9 family.

Functionally, binds to the 23S rRNA. The polypeptide is Large ribosomal subunit protein bL9 (Flavobacterium johnsoniae (strain ATCC 17061 / DSM 2064 / JCM 8514 / BCRC 14874 / CCUG 350202 / NBRC 14942 / NCIMB 11054 / UW101) (Cytophaga johnsonae)).